A 245-amino-acid chain; its full sequence is Tryptophan synthase alpha chain (245 aa).

Catalysis depends on proton acceptor residues Glu-35 and Asp-46.

This sequence belongs to the TrpA family. As to quaternary structure, tetramer of two alpha and two beta chains.

The catalysed reaction is (1S,2R)-1-C-(indol-3-yl)glycerol 3-phosphate + L-serine = D-glyceraldehyde 3-phosphate + L-tryptophan + H2O. Its pathway is amino-acid biosynthesis; L-tryptophan biosynthesis; L-tryptophan from chorismate: step 5/5. In terms of biological role, the alpha subunit is responsible for the aldol cleavage of indoleglycerol phosphate to indole and glyceraldehyde 3-phosphate. The polypeptide is Tryptophan synthase alpha chain (Sulfurisphaera tokodaii (strain DSM 16993 / JCM 10545 / NBRC 100140 / 7) (Sulfolobus tokodaii)).